A 154-amino-acid chain; its full sequence is Myoglobin (154 aa).

Positions 2–148 constitute a Globin domain; the sequence is VLSDAEWHLV…FRKDIAAKYK (147 aa). Serine 4 carries the post-translational modification Phosphoserine. Histidine 65 contributes to the nitrite binding site. Histidine 65 is a binding site for O2. A Phosphothreonine modification is found at threonine 68. Position 94 (histidine 94) interacts with heme b.

It belongs to the globin family. In terms of assembly, monomeric.

The protein localises to the cytoplasm. It localises to the sarcoplasm. The enzyme catalyses Fe(III)-heme b-[protein] + nitric oxide + H2O = Fe(II)-heme b-[protein] + nitrite + 2 H(+). It carries out the reaction H2O2 + AH2 = A + 2 H2O. Monomeric heme protein which primary function is to store oxygen and facilitate its diffusion within muscle tissues. Reversibly binds oxygen through a pentacoordinated heme iron and enables its timely and efficient release as needed during periods of heightened demand. Depending on the oxidative conditions of tissues and cells, and in addition to its ability to bind oxygen, it also has a nitrite reductase activity whereby it regulates the production of bioactive nitric oxide. Under stress conditions, like hypoxia and anoxia, it also protects cells against reactive oxygen species thanks to its pseudoperoxidase activity. This Balaenoptera acutorostrata (Common minke whale) protein is Myoglobin (MB).